The chain runs to 550 residues: Probable asparagine synthetase [glutamine-hydrolyzing] (550 aa).

Cys-2 serves as the catalytic For GATase activity. A Glutamine amidotransferase type-2 domain is found at 2-189 (CGIICFIQYG…PNQYVTIDLS (188 aa)). L-glutamine-binding positions include 53–57 (RLAIM), 78–80 (NGE), and Asp-100. Positions 213-530 (YYQSHKSLID…GGRDHIIPHY (318 aa)) constitute an Asparagine synthetase domain. Residues Leu-256, Val-284, and 360–361 (SG) contribute to the ATP site.

It carries out the reaction L-aspartate + L-glutamine + ATP + H2O = L-asparagine + L-glutamate + AMP + diphosphate + H(+). It functions in the pathway amino-acid biosynthesis; L-asparagine biosynthesis; L-asparagine from L-aspartate (L-Gln route): step 1/1. This Acanthamoeba polyphaga mimivirus (APMV) protein is Probable asparagine synthetase [glutamine-hydrolyzing].